We begin with the raw amino-acid sequence, 408 residues long: S-adenosylmethionine synthase (408 aa).

ATP is bound at residue His-15. Asp-17 provides a ligand contact to Mg(2+). Position 43 (Glu-43) interacts with K(+). Positions 56 and 100 each coordinate L-methionine. The interval 100 to 110 (QSPDIAQGVNE) is flexible loop. Residues 171-173 (DGK), 248-249 (KF), Asp-257, 263-264 (RK), Ala-280, and Lys-284 each bind ATP. Position 257 (Asp-257) interacts with L-methionine. Lys-288 is a binding site for L-methionine.

The protein belongs to the AdoMet synthase family. As to quaternary structure, homotetramer; dimer of dimers. The cofactor is Mg(2+). K(+) is required as a cofactor.

The protein resides in the cytoplasm. It carries out the reaction L-methionine + ATP + H2O = S-adenosyl-L-methionine + phosphate + diphosphate. The protein operates within amino-acid biosynthesis; S-adenosyl-L-methionine biosynthesis; S-adenosyl-L-methionine from L-methionine: step 1/1. Functionally, catalyzes the formation of S-adenosylmethionine (AdoMet) from methionine and ATP. The overall synthetic reaction is composed of two sequential steps, AdoMet formation and the subsequent tripolyphosphate hydrolysis which occurs prior to release of AdoMet from the enzyme. In Synechococcus sp. (strain CC9902), this protein is S-adenosylmethionine synthase.